The chain runs to 1041 residues: Cullin-associated NEDD8-dissociated protein 1, C-terminal part (1041 aa).

2 disordered regions span residues 1-24 and 64-103; these read MSSD…ELRE and DMGE…EGGY. The span at 9 to 24 shows a compositional bias: basic and acidic residues; that stretch reads YSHDDEHDPQTDELRE. Residues 65 to 103 show a composition bias toward acidic residues; the sequence is MGEDEEMSGTQDDGSEDDVTEEPDLEDDDFEDFEEEGGY. The HEAT 1 repeat unit spans residues 138–176; it reads SLYQQIAPAIVARFNKEREESVKLELVSTMDALVRKTAE. The tract at residues 189 to 237 is disordered; that stretch reads SVGSGSKISRKRRRQDSDASMIDFEPSMGTSSAAGTPLAAPSSPQSGPQ. Low complexity predominate over residues 225–237; it reads PLAAPSSPQSGPQ. 10 HEAT repeats span residues 242–279, 339–376, 434–472, 479–516, 525–560, 598–637, 670–708, 710–744, 780–817, and 822–867; these read NALP…VRYG, PFLI…ALTP, LSFE…LCSR, NWVR…NPNT, MKNL…GNAQ, GSGL…NVGV, GASC…GNVK, YLPT…MVRR, LDPP…DSRD, and VLRP…HLGE.

Belongs to the CAND family. As to quaternary structure, interacts with candA-N. Interacts with unneddylated cullins culA and culD.

It localises to the nucleus. Functionally, assembly factor of SCF (SKP1-CUL1-F-box protein) E3 ubiquitin ligase complexes that promotes the exchange of the substrate-recognition F-box subunit in SCF complexes, thereby playing a key role in the cellular repertoire of SCF complexes. Acts as a F-box protein exchange factor when interacting with candA-N. The protein is Cullin-associated NEDD8-dissociated protein 1, C-terminal part (candA-C) of Emericella nidulans (strain FGSC A4 / ATCC 38163 / CBS 112.46 / NRRL 194 / M139) (Aspergillus nidulans).